Here is a 595-residue protein sequence, read N- to C-terminus: Aspartate--tRNA(Asp/Asn) ligase (595 aa).

E171 lines the L-aspartate pocket. The segment at 195 to 198 (QLFK) is aspartate. R217 lines the L-aspartate pocket. ATP is bound by residues 217–219 (RDE) and Q226. Residue H454 coordinates L-aspartate. Residue E488 participates in ATP binding. R495 contributes to the L-aspartate binding site. 540–543 (GLDR) contacts ATP.

This sequence belongs to the class-II aminoacyl-tRNA synthetase family. Type 1 subfamily. Homodimer.

Its subcellular location is the cytoplasm. The catalysed reaction is tRNA(Asx) + L-aspartate + ATP = L-aspartyl-tRNA(Asx) + AMP + diphosphate. Aspartyl-tRNA synthetase with relaxed tRNA specificity since it is able to aspartylate not only its cognate tRNA(Asp) but also tRNA(Asn). Reaction proceeds in two steps: L-aspartate is first activated by ATP to form Asp-AMP and then transferred to the acceptor end of tRNA(Asp/Asn). The chain is Aspartate--tRNA(Asp/Asn) ligase from Bordetella petrii (strain ATCC BAA-461 / DSM 12804 / CCUG 43448).